Here is a 284-residue protein sequence, read N- to C-terminus: Tryptophan 2,3-dioxygenase (284 aa).

Residues 53-57 (FIVQH), tyrosine 115, and arginine 119 each bind substrate. Position 242 (histidine 242) interacts with heme. Threonine 256 lines the substrate pocket.

This sequence belongs to the tryptophan 2,3-dioxygenase family. In terms of assembly, homotetramer. Requires heme as cofactor.

The enzyme catalyses L-tryptophan + O2 = N-formyl-L-kynurenine. It functions in the pathway amino-acid degradation; L-tryptophan degradation via kynurenine pathway; L-kynurenine from L-tryptophan: step 1/2. Its function is as follows. Heme-dependent dioxygenase that catalyzes the oxidative cleavage of the L-tryptophan (L-Trp) pyrrole ring and converts L-tryptophan to N-formyl-L-kynurenine. Catalyzes the oxidative cleavage of the indole moiety. The chain is Tryptophan 2,3-dioxygenase from Bordetella parapertussis (strain 12822 / ATCC BAA-587 / NCTC 13253).